The primary structure comprises 208 residues: Large ribosomal subunit protein uL4 (208 aa).

The disordered stretch occupies residues 44 to 76 (RRQGTQSTKTKSEVRGGGRKPWRQKGTGRARHG). Residues 60-76 (GGRKPWRQKGTGRARHG) show a composition bias toward basic residues.

It belongs to the universal ribosomal protein uL4 family. Part of the 50S ribosomal subunit.

Functionally, one of the primary rRNA binding proteins, this protein initially binds near the 5'-end of the 23S rRNA. It is important during the early stages of 50S assembly. It makes multiple contacts with different domains of the 23S rRNA in the assembled 50S subunit and ribosome. In terms of biological role, forms part of the polypeptide exit tunnel. The polypeptide is Large ribosomal subunit protein uL4 (Acetivibrio thermocellus (strain ATCC 27405 / DSM 1237 / JCM 9322 / NBRC 103400 / NCIMB 10682 / NRRL B-4536 / VPI 7372) (Clostridium thermocellum)).